A 402-amino-acid chain; its full sequence is Olfactomedin-like protein 1 (402 aa).

The N-terminal stretch at 1–28 (MMVALPGASASLVLFLAAFLPPLQHAQD) is a signal peptide. N-linked (GlcNAc...) asparagine glycosylation is present at Asn-66. A coiled-coil region spans residues 73–135 (RCQTHTNEYR…EAEEEKKIRT (63 aa)). Residues Asn-138 and Asn-183 are each glycosylated (N-linked (GlcNAc...) asparagine). An Olfactomedin-like domain is found at 140 to 397 (SCDNMLMAIK…QIIYKLQTKK (258 aa)). A disulfide bridge connects residues Cys-141 and Cys-324.

Post-translationally, highly N-glycosylated.

It localises to the secreted. The sequence is that of Olfactomedin-like protein 1 (Olfml1) from Rattus norvegicus (Rat).